Consider the following 307-residue polypeptide: Small ribosomal subunit biogenesis GTPase RsgA (307 aa).

Residues methionine 1–asparagine 21 are disordered. The segment covering glycine 10–asparagine 21 has biased composition (polar residues). In terms of domain architecture, CP-type G spans arginine 85–phenylalanine 242. GTP-binding positions include asparagine 135–aspartate 138 and glycine 184–threonine 192. Zn(2+)-binding residues include cysteine 266, cysteine 271, histidine 273, and cysteine 279.

It belongs to the TRAFAC class YlqF/YawG GTPase family. RsgA subfamily. As to quaternary structure, monomer. Associates with 30S ribosomal subunit, binds 16S rRNA. It depends on Zn(2+) as a cofactor.

The protein resides in the cytoplasm. In terms of biological role, one of several proteins that assist in the late maturation steps of the functional core of the 30S ribosomal subunit. Helps release RbfA from mature subunits. May play a role in the assembly of ribosomal proteins into the subunit. Circularly permuted GTPase that catalyzes slow GTP hydrolysis, GTPase activity is stimulated by the 30S ribosomal subunit. This Neisseria gonorrhoeae (strain ATCC 700825 / FA 1090) protein is Small ribosomal subunit biogenesis GTPase RsgA.